An 84-amino-acid polypeptide reads, in one-letter code: Perlustrin (84 aa).

The region spanning 1–82 is the IGFBP N-terminal domain; the sequence is LSCASCENAA…LDFKGVCARV (82 aa). Intrachain disulfides connect C3-C28, C6-C30, C11-C31, C18-C34, C42-C55, and C49-C79.

In terms of tissue distribution, shell.

In terms of biological role, binds human IGF1 and IGF2 and bovine insulin. This is Perlustrin from Haliotis laevigata (Smooth Australian abalone).